A 341-amino-acid chain; its full sequence is Phosphoribosylformylglycinamidine cyclo-ligase (341 aa).

This sequence belongs to the AIR synthase family.

Its subcellular location is the cytoplasm. The catalysed reaction is 2-formamido-N(1)-(5-O-phospho-beta-D-ribosyl)acetamidine + ATP = 5-amino-1-(5-phospho-beta-D-ribosyl)imidazole + ADP + phosphate + H(+). It functions in the pathway purine metabolism; IMP biosynthesis via de novo pathway; 5-amino-1-(5-phospho-D-ribosyl)imidazole from N(2)-formyl-N(1)-(5-phospho-D-ribosyl)glycinamide: step 2/2. The protein is Phosphoribosylformylglycinamidine cyclo-ligase of Synechocystis sp. (strain ATCC 27184 / PCC 6803 / Kazusa).